The primary structure comprises 149 residues: Stathmin (149 aa).

Ala-2 carries the post-translational modification N-acetylalanine. Phosphoserine is present on Ser-4. An SLD domain is found at 4–145; it reads SDIQVKELEK…NKESKDPADE (142 aa). Lys-9 is subject to N6-acetyllysine. Ser-16 carries the post-translational modification Phosphoserine; by PKA. Residue Ser-25 is modified to Phosphoserine; by CDK1, MAPK1 and MAPK3. A disordered region spans residues 27-46; the sequence is RSKESVPDFPLSPPKKKDLS. Lys-29 is subject to N6-methyllysine. Ser-31 carries the phosphoserine modification. Ser-38 carries the post-translational modification Phosphoserine; by CDK1, MAPK1 and MAPK3. Residues 41 to 140 are a coiled coil; the sequence is KKKDLSLEEI…EEVRKNKESK (100 aa). Ser-63 bears the Phosphoserine; by PKA mark. N6-acetyllysine occurs at positions 100 and 119. Positions 104–143 are enriched in basic and acidic residues; the sequence is KMEANKENREAQMAAKLERLREKDKHVEEVRKNKESKDPA. The tract at residues 104–149 is disordered; the sequence is KMEANKENREAQMAAKLERLREKDKHVEEVRKNKESKDPADETEAD.

The protein belongs to the stathmin family. As to quaternary structure, binds to two alpha/beta-tubulin heterodimers. Interacts with KIST. Many different phosphorylated forms are observed depending on specific combinations among the sites which can be phosphorylated. MAPK is responsible for the phosphorylation of stathmin in response to NGF. Phosphorylation at Ser-16 seems to be required for neuron polarization. Highly expressed in the lateral nucleus of the amygdala.

It is found in the cytoplasm. It localises to the cytoskeleton. Its function is as follows. Involved in the regulation of the microtubule (MT) filament system by destabilizing microtubules. Prevents assembly and promotes disassembly of microtubules. Phosphorylation at Ser-16 may be required for axon formation during neurogenesis. Involved in the control of the learned and innate fear. This is Stathmin (Stmn1) from Mus musculus (Mouse).